The following is a 212-amino-acid chain: Acyl-homoserine-lactone synthase (212 aa).

The protein belongs to the autoinducer synthase family.

It catalyses the reaction a fatty acyl-[ACP] + S-adenosyl-L-methionine = an N-acyl-L-homoserine lactone + S-methyl-5'-thioadenosine + holo-[ACP] + H(+). Functionally, required for the synthesis of OHHL (N-(3-oxohexanoyl)-L-homoserine lactone), an autoinducer molecule which binds to ExpR and thus acts in virulence (soft rot disease) through the activation of genes for plant tissue macerating enzymes. The polypeptide is Acyl-homoserine-lactone synthase (expI) (Dickeya dadantii (strain 3937) (Erwinia chrysanthemi (strain 3937))).